A 625-amino-acid chain; its full sequence is MAVEKVQAFEKVSIPTEKQPGSEDLGFDPAELQKKYEAERNLRIQNGGVSQYRSAWKSGFGYYLEDPNADANFSRDPISARYDVVIMGGGFSGLLVAARLVQQGITNFTILDKSADFGGTWYWSRYPGAQCDVDSTIYLPLLEEVGYIPKEKYSFGPEILEHAQRIAKHFGLYPKALFQTEVKTCHWSEEDSLWTVQTDRGDNLRAQFIVSAFGISHMPKLPGISGIENFQGKSFHASRWDYNYTGGDSTGNMTKLADKRVGIIGTGATAIQVVPKLAESAKELYVFQRTPSSVDVRNNRPTDAEWAKTLRPGWQQERIDNFYAITTGENVTEDLIDDGWTEIFRLVAAPFFASADIEQSLENRMEQVQIADFKKMESVRARVDSLVKDPATAASLKPWYNQFCKRPCFHDEYLQAFNHPNVTLVDTRGHGVDAVTTKGVLAQGKEYELDCLIYSTGYEWYTEWEQRTRSQVYGRNGLTITKKWSQGITTYHGWGVHGFPNFMVLSSAQVNNVPNYTHMVGYLSRHLAYIVRTCKDRGIKSVEPTATAESKWVQQVVEQGAARRDQMKLCTPGYLNHEGDITEKTDRLYSYNGSGDSKFQIILDKWRDDGKLVGLSIDCATEADL.

FAD-binding positions include Asp112, 120–123 (TWYW), Asp132, and Tyr138. Residue 130 to 132 (QCD) coordinates NADP(+). Residues 266 to 272 (TGATAIQ), 289 to 290 (RT), and 405 to 406 (KR) each bind NADP(+).

Belongs to the FAD-binding monooxygenase family. The cofactor is FAD.

Its pathway is mycotoxin biosynthesis. In terms of biological role, baeyer-Villiger monooxygenase; part of the core atranone cluster (CAC) which products are predicted to catalyze most or all steps of mycotoxin atranone synthesis, starting from geranylgeranyl pyrophosphate (GGPP). The initial cyclization of GGPP to dolabellane is probably performed by the terpene cyclase ATR13. The Baeyer-Villiger oxidation near the end of the atranone synthesis, which converts atranones D and E to atranones F and G is predicted to be catalyzed by the monooxygenase ATR8. Of the CAC's other predicted gene products, the reducing PKS ATR6 might synthesize a polyketide chain. This polyketide is probably transferred onto the atranone backbone by the polyketide transferase ATR5. Other predicted CAC products include 4 oxygenases (ATR2, ATR3, ATR4, and ATR14), 3 short-chain reductases (ATR7, ATR9, and ATR10), and a methyltransferase (ATR12). These may all be involved in the various steps of atranone biosynthesis, although their specific roles must await experimental determination. The polypeptide is Baeyer-Villiger monooxygenase ATR8 (Stachybotrys chlorohalonatus (strain IBT 40285)).